A 276-amino-acid polypeptide reads, in one-letter code: Extracellular metalloprotease VDBG_07883 (276 aa).

The N-terminal stretch at 1–17 is a signal peptide; it reads MQSKFLWIAAASAATAA. N-linked (GlcNAc...) asparagine glycosylation is found at N70 and N102. H191 is a Zn(2+) binding site. E192 is a catalytic residue. Residue H195 coordinates Zn(2+). Residue N222 is glycosylated (N-linked (GlcNAc...) asparagine). A disulfide bridge links C227 with C254.

Belongs to the peptidase M43B family.

It localises to the secreted. Functionally, secreted metalloproteinase that allows assimilation of proteinaceous substrates. The polypeptide is Extracellular metalloprotease VDBG_07883 (Verticillium alfalfae (strain VaMs.102 / ATCC MYA-4576 / FGSC 10136) (Verticillium wilt of alfalfa)).